The primary structure comprises 367 residues: DNA replication and repair protein RecF (367 aa).

Position 30–37 (30–37 (GANGSGKT)) interacts with ATP.

It belongs to the RecF family.

The protein resides in the cytoplasm. The RecF protein is involved in DNA metabolism; it is required for DNA replication and normal SOS inducibility. RecF binds preferentially to single-stranded, linear DNA. It also seems to bind ATP. This chain is DNA replication and repair protein RecF, found in Pseudomonas putida (strain W619).